The primary structure comprises 546 residues: Phosphomethylpyrimidine synthase (546 aa).

Substrate contacts are provided by residues asparagine 145, methionine 174, tyrosine 203, histidine 239, 259-261 (SRG), 300-303 (DGLR), and glutamate 339. Position 343 (histidine 343) interacts with Zn(2+). Tyrosine 366 contributes to the substrate binding site. Histidine 407 lines the Zn(2+) pocket. Positions 487, 490, and 495 each coordinate [4Fe-4S] cluster.

The protein belongs to the ThiC family. [4Fe-4S] cluster serves as cofactor.

It carries out the reaction 5-amino-1-(5-phospho-beta-D-ribosyl)imidazole + S-adenosyl-L-methionine = 4-amino-2-methyl-5-(phosphooxymethyl)pyrimidine + CO + 5'-deoxyadenosine + formate + L-methionine + 3 H(+). It functions in the pathway cofactor biosynthesis; thiamine diphosphate biosynthesis. Catalyzes the synthesis of the hydroxymethylpyrimidine phosphate (HMP-P) moiety of thiamine from aminoimidazole ribotide (AIR) in a radical S-adenosyl-L-methionine (SAM)-dependent reaction. The protein is Phosphomethylpyrimidine synthase of Mycobacterium ulcerans (strain Agy99).